The following is a 310-amino-acid chain: Aspartate carbamoyltransferase catalytic subunit (310 aa).

Carbamoyl phosphate contacts are provided by Arg-57 and Thr-58. Lys-86 contacts L-aspartate. Carbamoyl phosphate-binding residues include Arg-107, His-135, and Gln-138. L-aspartate-binding residues include Arg-168 and Arg-229. Leu-268 and Pro-269 together coordinate carbamoyl phosphate.

It belongs to the aspartate/ornithine carbamoyltransferase superfamily. ATCase family. Heterooligomer of catalytic and regulatory chains.

The enzyme catalyses carbamoyl phosphate + L-aspartate = N-carbamoyl-L-aspartate + phosphate + H(+). It participates in pyrimidine metabolism; UMP biosynthesis via de novo pathway; (S)-dihydroorotate from bicarbonate: step 2/3. Functionally, catalyzes the condensation of carbamoyl phosphate and aspartate to form carbamoyl aspartate and inorganic phosphate, the committed step in the de novo pyrimidine nucleotide biosynthesis pathway. The protein is Aspartate carbamoyltransferase catalytic subunit of Thermococcus kodakarensis (strain ATCC BAA-918 / JCM 12380 / KOD1) (Pyrococcus kodakaraensis (strain KOD1)).